The primary structure comprises 424 residues: Serine--tRNA ligase (424 aa).

L-serine is bound at residue 233–235 (TAE). ATP is bound at residue 264-266 (RRE). Residue glutamate 287 participates in L-serine binding. 351 to 354 (EISS) provides a ligand contact to ATP. Residue serine 386 participates in L-serine binding.

Belongs to the class-II aminoacyl-tRNA synthetase family. Type-1 seryl-tRNA synthetase subfamily. Homodimer. The tRNA molecule binds across the dimer.

The protein localises to the cytoplasm. It carries out the reaction tRNA(Ser) + L-serine + ATP = L-seryl-tRNA(Ser) + AMP + diphosphate + H(+). The enzyme catalyses tRNA(Sec) + L-serine + ATP = L-seryl-tRNA(Sec) + AMP + diphosphate + H(+). It functions in the pathway aminoacyl-tRNA biosynthesis; selenocysteinyl-tRNA(Sec) biosynthesis; L-seryl-tRNA(Sec) from L-serine and tRNA(Sec): step 1/1. In terms of biological role, catalyzes the attachment of serine to tRNA(Ser). Is also able to aminoacylate tRNA(Sec) with serine, to form the misacylated tRNA L-seryl-tRNA(Sec), which will be further converted into selenocysteinyl-tRNA(Sec). The protein is Serine--tRNA ligase of Pseudothermotoga lettingae (strain ATCC BAA-301 / DSM 14385 / NBRC 107922 / TMO) (Thermotoga lettingae).